A 530-amino-acid polypeptide reads, in one-letter code: Autoinducer-2 kinase (530 aa).

This sequence belongs to the FGGY kinase family.

It localises to the cytoplasm. The enzyme catalyses (S)-4,5-dihydroxypentane-2,3-dione + ATP = (2S)-2-hydroxy-3,4-dioxopentyl phosphate + ADP + H(+). Functionally, catalyzes the phosphorylation of autoinducer-2 (AI-2) to phospho-AI-2, which subsequently inactivates the transcriptional regulator LsrR and leads to the transcription of the lsr operon. Phosphorylates the ring-open form of (S)-4,5-dihydroxypentane-2,3-dione (DPD), which is the precursor to all AI-2 signaling molecules, at the C5 position. This Escherichia coli (strain ATCC 8739 / DSM 1576 / NBRC 3972 / NCIMB 8545 / WDCM 00012 / Crooks) protein is Autoinducer-2 kinase.